The sequence spans 257 residues: Type III pantothenate kinase (257 aa).

Aspartate 6–valine 13 is a binding site for ATP. Residues tyrosine 100 and glycine 107 to arginine 110 each bind substrate. Aspartate 109 (proton acceptor) is an active-site residue. Residue aspartate 129 coordinates K(+). Threonine 132 is a binding site for ATP. Residue threonine 185 participates in substrate binding.

This sequence belongs to the type III pantothenate kinase family. Homodimer. It depends on NH4(+) as a cofactor. K(+) serves as cofactor.

The protein resides in the cytoplasm. It catalyses the reaction (R)-pantothenate + ATP = (R)-4'-phosphopantothenate + ADP + H(+). Its pathway is cofactor biosynthesis; coenzyme A biosynthesis; CoA from (R)-pantothenate: step 1/5. Catalyzes the phosphorylation of pantothenate (Pan), the first step in CoA biosynthesis. This Desulfatibacillum aliphaticivorans protein is Type III pantothenate kinase.